We begin with the raw amino-acid sequence, 511 residues long: MEKFEGYSEKHKSRQQYFVYPLLFQEYIYAFAHDYGLNGSEPVEIVSCNNKKFSSLLVKRLIIRIYQQNFWDNSVNHPNQDRLLYYKNYFYSEFYSQILSEGFAILVEIPFSLRELSCPKEKEIPKFQNLRSIHSIFPFLEDKFLHLDYLSHIEIPYPIHLEILVQLLQYRIQDVPSLHLLRFFLNYYSNSNSFITSMKSIFIFKKENKRLFRFLYNSYVSEYEFFLLFLRKQSSCLPLASSGTFLERIHFSRKMEHFWIMYPGFSRKNLWFFMDPLIHYVRYQGKAILASKGTFFLKKKWKCYHINLWQYYFRFWTQPRRIHINQLANSCFDFMGYLSSVPKSPLLVRNKMLENSFLIDTRMKKFDTIVPATLLIGYLSKAQFCTGSGHPISKPIWTDLSDWDILDRFGRICRNLFHYHSGSSKKQTLYRLKYILRLSCARTLARKHKSTVRTFMQRLGSVFLEEFFTEEEQIFCLMFTKTTLFSFSGSHTERIWYLDIIRINDLVNPLN.

The protein belongs to the intron maturase 2 family. MatK subfamily.

The protein localises to the plastid. It localises to the chloroplast. Its function is as follows. Usually encoded in the trnK tRNA gene intron. Probably assists in splicing its own and other chloroplast group II introns. In Bromus inermis (Smooth brome grass), this protein is Maturase K.